The sequence spans 344 residues: Proline-rich transmembrane protein 2 (344 aa).

2 disordered regions span residues Met-1–Pro-220 and Gly-233–Gly-265. The Cytoplasmic portion of the chain corresponds to Met-1–Tyr-272. Phosphoserine is present on Ser-28. Positions Pro-69 to Val-82 are enriched in low complexity. 2 positions are modified to phosphothreonine: Thr-74 and Thr-78. The segment covering Ala-124–Asn-143 has biased composition (polar residues). Over residues Thr-151 to Ala-162 the composition is skewed to pro residues. Residues Glu-168–Ser-178 are compositionally biased toward polar residues. Pro residues predominate over residues Ala-201 to Lys-211. At Ser-242 the chain carries Phosphoserine. An Omega-N-methylarginine modification is found at Arg-244. Residues Ser-252 and Ser-253 each carry the phosphoserine modification. Positions Ile-273–Ala-293 form an intramembrane region, helical. The Cytoplasmic segment spans residues Tyr-294–Ser-321. A helical transmembrane segment spans residues Ile-322–Val-342. Over Tyr-343 to Lys-344 the chain is Extracellular.

This sequence belongs to the CD225/Dispanin family. As to quaternary structure, component of the outer core of AMPAR complex. AMPAR complex consists of an inner core made of 4 pore-forming GluA/GRIA proteins (GRIA1, GRIA2, GRIA3 and GRIA4) and 4 major auxiliary subunits arranged in a twofold symmetry. One of the two pairs of distinct binding sites is occupied either by CNIH2, CNIH3 or CACNG2, CACNG3. The other harbors CACNG2, CACNG3, CACNG4, CACNG8 or GSG1L. This inner core of AMPAR complex is complemented by outer core constituents binding directly to the GluA/GRIA proteins at sites distinct from the interaction sites of the inner core constituents. Outer core constituents include at least PRRT1, PRRT2, CKAMP44/SHISA9, FRRS1L and NRN1. The proteins of the inner and outer core serve as a platform for other, more peripherally associated AMPAR constituents. Alone or in combination, these auxiliary subunits control the gating and pharmacology of the AMPAR complex and profoundly impact their biogenesis and protein processing. Interacts with intersectin 1/ITSN1. Interacts with SNARE complex components, including SNAP25, STX1A, SYT1 and SYT2; this interaction may inhibit SNARE complex formation. In terms of tissue distribution, neuron-specific expression throughout the brain, including hippocampus (at protein level).

It is found in the cell membrane. It localises to the presynaptic cell membrane. The protein localises to the synapse. The protein resides in the cell projection. Its subcellular location is the axon. It is found in the cytoplasmic vesicle. It localises to the secretory vesicle. The protein localises to the synaptic vesicle membrane. The protein resides in the postsynaptic density membrane. Its subcellular location is the dendritic spine. Functionally, as a component of the outer core of AMPAR complex, may be involved in synaptic transmission in the central nervous system. In hippocampal neurons, in presynaptic terminals, plays an important role in the final steps of neurotransmitter release, possibly by regulating Ca(2+)-sensing. In the cerebellum, may inhibit SNARE complex formation and down-regulate short-term facilitation. The polypeptide is Proline-rich transmembrane protein 2 (Prrt2) (Rattus norvegicus (Rat)).